The chain runs to 751 residues: Putative tyrosine-protein kinase EpsB (751 aa).

The Cytoplasmic segment spans residues 1–31 (MTQNLSQPPAVNAPESELDLVRYLDVLVANR). The chain crosses the membrane as a helical span at residues 32-52 (WLIAGIAAVVMLLGATYAFLA). The Periplasmic segment spans residues 53–444 (RPVYEADVLV…VPEEPVKPKK (392 aa)). A helical transmembrane segment spans residues 445–465 (LTVTALAGVLGVVLGVVAAFV). Over 466–751 (RNTLFGGITE…PSAEAEAESA (286 aa)) the chain is Cytoplasmic.

Belongs to the etk/wzc family.

It localises to the cell inner membrane. The enzyme catalyses L-tyrosyl-[protein] + ATP = O-phospho-L-tyrosyl-[protein] + ADP + H(+). Its function is as follows. Probably involved in polymerization and/or export of exopolysaccharide EPS I which functions as a virulence factor. May be involved in an ATP-dependent process in the pathway for EPS I production, possibly export of the trimeric repeat units across the inner membrane or their polymerization. In Ralstonia nicotianae (strain ATCC BAA-1114 / GMI1000) (Ralstonia solanacearum), this protein is Putative tyrosine-protein kinase EpsB (epsB).